The sequence spans 93 residues: uncharacterized protein (93 aa).

Positions 36 to 69 form a coiled coil; sequence SEERLLSRLFEEMDELREAVEKEDWENLRDELLD.

This is an uncharacterized protein from Archaeoglobus fulgidus (strain ATCC 49558 / DSM 4304 / JCM 9628 / NBRC 100126 / VC-16).